Reading from the N-terminus, the 244-residue chain is THO complex subunit 4A (244 aa).

Residues methionine 1–alanine 82 form a disordered region. An N-acetylserine modification is found at serine 2. Gly residues predominate over residues glycine 21–proline 35. Basic and acidic residues predominate over residues methionine 67–serine 77. The RRM domain occupies threonine 88–threonine 165. A disordered region spans residues threonine 169–asparagine 244. Residues tryptophan 187–glycine 211 show a composition bias toward gly residues. The segment covering proline 220–asparagine 244 has biased composition (basic and acidic residues).

The protein belongs to the ALYREF family.

The protein resides in the nucleus. The protein localises to the nucleoplasm. It localises to the nucleolus. In terms of biological role, export adapter involved in nuclear export of spliced and unspliced mRNA. The chain is THO complex subunit 4A (ALY1) from Arabidopsis thaliana (Mouse-ear cress).